A 417-amino-acid polypeptide reads, in one-letter code: Calreticulin (417 aa).

The N-terminal stretch at M1–A17 is a signal peptide. The interval D18–E197 is N-domain. Residue Q26 coordinates Ca(2+). The residue at position 48 (K48) is an N6-acetyllysine. Ca(2+) is bound by residues K62 and K64. At K64 the chain carries N6-(2-hydroxyisobutyryl)lysine. Y109, K111, Y128, and D135 together coordinate an alpha-D-glucoside. C137 and C163 are joined by a disulfide. K159 carries the N6-acetyllysine modification. A glycan (N-linked (GlcNAc...) asparagine) is linked at N179. The 1-1 repeat unit spans residues V191–F202. The tract at residues V191–E255 is 4 X approximate repeats. The interval S193–E270 is disordered. Residues D198–Y308 form a P-domain region. Positions K207–E251 are enriched in basic and acidic residues. Position 209 is an N6-acetyllysine (K209). 6 repeat units span residues D210 to D221, D227 to K238, D244 to E255, G259 to P269, G273 to P283, and G287 to P297. The tract at residues D237–E270 is interaction with PPIB. Residues D252 to W261 show a composition bias toward acidic residues. Residues G259 to P297 are 3 X approximate repeats. Residues E309 to L417 are C-domain. D317 provides a ligand contact to an alpha-D-glucoside. D328 contacts Ca(2+). The tract at residues T350–L417 is disordered. Positions A352–E378 are enriched in basic and acidic residues. Over residues E379–A408 the composition is skewed to acidic residues. A Prevents secretion from ER motif is present at residues K414 to L417.

It belongs to the calreticulin family. Monomer. Component of an EIF2 complex at least composed of CELF1/CUGBP1, CALR, CALR3, EIF2S1, EIF2S2, HSP90B1 and HSPA5. Interacts with PDIA3/ERp57 and SPACA9. Interacts with TRIM21. Interacts with NR3C1. Interacts with PPIB. Interacts (via P-domain) with PDIA5. Interacts with GABARAP. Interacts with CLCC1.

It is found in the endoplasmic reticulum lumen. The protein localises to the cytoplasm. It localises to the cytosol. The protein resides in the secreted. Its subcellular location is the extracellular space. It is found in the extracellular matrix. The protein localises to the cell surface. It localises to the sarcoplasmic reticulum lumen. The protein resides in the cytoplasmic vesicle. Its subcellular location is the secretory vesicle. It is found in the cortical granule. The protein localises to the cytolytic granule. Its function is as follows. Calcium-binding chaperone that promotes folding, oligomeric assembly and quality control in the endoplasmic reticulum (ER) via the calreticulin/calnexin cycle. This lectin interacts transiently with almost all of the monoglucosylated glycoproteins that are synthesized in the ER. Interacts with the DNA-binding domain of NR3C1 and mediates its nuclear export. Involved in maternal gene expression regulation. May participate in oocyte maturation via the regulation of calcium homeostasis. Present in the cortical granules of non-activated oocytes, is exocytosed during the cortical reaction in response to oocyte activation and might participate in the block to polyspermy. The sequence is that of Calreticulin (CALR) from Bos taurus (Bovine).